Here is a 92-residue protein sequence, read N- to C-terminus: Small ribosomal subunit protein uS19c (92 aa).

It belongs to the universal ribosomal protein uS19 family.

It is found in the plastid. The protein resides in the chloroplast. In terms of biological role, protein S19 forms a complex with S13 that binds strongly to the 16S ribosomal RNA. This Cicer arietinum (Chickpea) protein is Small ribosomal subunit protein uS19c.